A 619-amino-acid polypeptide reads, in one-letter code: MFPRVSMRRRSAEVSPTEPMEKGNGKNQTNRICLLVALSLFFWALLLYFHFVVLGTSNIDKQLQLQPSYAQSQPSSVSLRVDKFPIEPHAAPSKPPPKEPLVTIDKPILPPAPVANSSSTFKPPRIVESGKKQEFSFIRALKTVDNKSDPCGGKYIYVHNLPSKFNEDMLRDCKKLSLWTNMCKFTTNAGLGPPLENVEGVFSDEGWYATNQFAVDVIFSNRMKQYKCLTNDSSLAAAIFVPFYAGFDIARYLWGYNISRRDAASLELVDWLMKRPEWDIMRGKDHFLVAGRITWDFRRLSEEETDWGNKLLFLPAAKNMSMLVVESSPWNANDFGIPYPTYFHPAKDSEVFEWQDRMRNLERKWLFSFAGAPRPDNPKSIRGQIIDQCRNSNVGKLLECDFGESKCHAPSSIMQMFQSSLFCLQPQGDSYTRRSAFDSMLAGCIPVFFHPGSAYTQYTWHLPKNYTTYSVFIPEDDVRKRNISIEERLLQIPAKQVKIMRENVINLIPRLIYADPRSELETQKDAFDVSVQAVIDKVTRLRKNMIEGRTEYDYFVEENSWKYALLEEGQREAGGHVWDPFFSKPKPGEDGSSDGNGGTTISADAAKNSWKSEQRDKTQ.

Residues 1–26 (MFPRVSMRRRSAEVSPTEPMEKGNGK) form a disordered region. At 1-33 (MFPRVSMRRRSAEVSPTEPMEKGNGKNQTNRIC) the chain is on the cytoplasmic side. A helical; Signal-anchor for type II membrane protein membrane pass occupies residues 34 to 54 (LLVALSLFFWALLLYFHFVVL). Topologically, residues 55–619 (GTSNIDKQLQ…WKSEQRDKTQ (565 aa)) are lumenal. 7 N-linked (GlcNAc...) asparagine glycosylation sites follow: asparagine 116, asparagine 146, asparagine 231, asparagine 257, asparagine 319, asparagine 465, and asparagine 482. The disordered stretch occupies residues 576-619 (HVWDPFFSKPKPGEDGSSDGNGGTTISADAAKNSWKSEQRDKTQ). The segment covering 610-619 (WKSEQRDKTQ) has biased composition (basic and acidic residues).

The protein belongs to the glycosyltransferase 47 family. As to quaternary structure, interacts with CSLC4 and FUT1. In terms of tissue distribution, ubiquitous.

It is found in the golgi apparatus. It localises to the golgi stack membrane. The protein resides in the golgi apparatus membrane. Involved in the attachment of the Gal residue on the third xylosyl unit within the XXXG core structure of xyloglucan, the principal glycan that interlaces the cellulose microfibrils in plant cell wall. Associates with other xyloglucan-synthesizing enzymes to form multiprotein complexes for xyloglucan synthesis in the Golgi. Interacts with actin and is required for the proper endomembrane organization and for the cell elongation. Not involved in the trafficking from the endoplasmic reticulum to the vacuoles. Involved in salt stress tolerance. Participates in the control of the expression of genes encoding for proteins involved in reactive oxygen species (ROS) detoxification under salt stress. May contribute to the maintenance of the proper organization of actin microfilaments during salt stress-induced ROS production. The protein is Xyloglucan galactosyltransferase MUR3 of Arabidopsis thaliana (Mouse-ear cress).